Reading from the N-terminus, the 195-residue chain is 3-isopropylmalate dehydratase small subunit (195 aa).

Belongs to the LeuD family. LeuD type 1 subfamily. As to quaternary structure, heterodimer of LeuC and LeuD.

It catalyses the reaction (2R,3S)-3-isopropylmalate = (2S)-2-isopropylmalate. It functions in the pathway amino-acid biosynthesis; L-leucine biosynthesis; L-leucine from 3-methyl-2-oxobutanoate: step 2/4. Its function is as follows. Catalyzes the isomerization between 2-isopropylmalate and 3-isopropylmalate, via the formation of 2-isopropylmaleate. The protein is 3-isopropylmalate dehydratase small subunit of Frankia alni (strain DSM 45986 / CECT 9034 / ACN14a).